A 362-amino-acid chain; its full sequence is Holliday junction branch migration complex subunit RuvB (362 aa).

Positions 4 to 186 (PDRPQRLVEQ…FGIPLRMQFY (183 aa)) are large ATPase domain (RuvB-L). ATP is bound by residues I25, R26, G67, K70, T71, T72, 133–135 (EDF), R176, Y186, and R223. T71 is a Mg(2+) binding site. Positions 187-257 (EPEELQLIVA…AAGGALTRLE (71 aa)) are small ATPAse domain (RuvB-S). Positions 260 to 362 (RLGFDAMDRR…GTPEGEGEDV (103 aa)) are head domain (RuvB-H). 3 residues coordinate DNA: R296, R315, and R320.

The protein belongs to the RuvB family. As to quaternary structure, homohexamer. Forms an RuvA(8)-RuvB(12)-Holliday junction (HJ) complex. HJ DNA is sandwiched between 2 RuvA tetramers; dsDNA enters through RuvA and exits via RuvB. An RuvB hexamer assembles on each DNA strand where it exits the tetramer. Each RuvB hexamer is contacted by two RuvA subunits (via domain III) on 2 adjacent RuvB subunits; this complex drives branch migration. In the full resolvosome a probable DNA-RuvA(4)-RuvB(12)-RuvC(2) complex forms which resolves the HJ.

It is found in the cytoplasm. The catalysed reaction is ATP + H2O = ADP + phosphate + H(+). The RuvA-RuvB-RuvC complex processes Holliday junction (HJ) DNA during genetic recombination and DNA repair, while the RuvA-RuvB complex plays an important role in the rescue of blocked DNA replication forks via replication fork reversal (RFR). RuvA specifically binds to HJ cruciform DNA, conferring on it an open structure. The RuvB hexamer acts as an ATP-dependent pump, pulling dsDNA into and through the RuvAB complex. RuvB forms 2 homohexamers on either side of HJ DNA bound by 1 or 2 RuvA tetramers; 4 subunits per hexamer contact DNA at a time. Coordinated motions by a converter formed by DNA-disengaged RuvB subunits stimulates ATP hydrolysis and nucleotide exchange. Immobilization of the converter enables RuvB to convert the ATP-contained energy into a lever motion, pulling 2 nucleotides of DNA out of the RuvA tetramer per ATP hydrolyzed, thus driving DNA branch migration. The RuvB motors rotate together with the DNA substrate, which together with the progressing nucleotide cycle form the mechanistic basis for DNA recombination by continuous HJ branch migration. Branch migration allows RuvC to scan DNA until it finds its consensus sequence, where it cleaves and resolves cruciform DNA. In Rhodospirillum centenum (strain ATCC 51521 / SW), this protein is Holliday junction branch migration complex subunit RuvB.